We begin with the raw amino-acid sequence, 30 residues long: Snaclec coagulation factor IX/factor X-binding protein subunit A (30 aa).

Residues 1-30 enclose the C-type lectin domain; it reads DCPSDWSPYEGHCYKHFIKWMNNEDAERFC. The cysteines at positions 2 and 13 are disulfide-linked.

Belongs to the snaclec family. As to quaternary structure, heterodimer of subunits A and B; disulfide-linked. As to expression, expressed by the venom gland.

It is found in the secreted. Its function is as follows. Anticoagulant protein which binds to the gamma-carboxyglutamic acid-domain regions of factors IX (F9) and factor X (F10) in the presence of calcium with a 1 to 1 stoichiometry. This is Snaclec coagulation factor IX/factor X-binding protein subunit A from Bothrops jararaca (Jararaca).